Consider the following 727-residue polypeptide: Transcription activator of gluconeogenesis TRV_01442 (727 aa).

The segment covering 1-32 has biased composition (polar residues); sequence MSPHQTTGQESDNMTVNGENAQASSQYIQSNE. Positions 1–62 are disordered; that stretch reads MSPHQTTGQE…PSRPKRKKAK (62 aa). Basic and acidic residues predominate over residues 39–55; it reads ATEKKASAAKAAKDPSR. Residues 65–93 constitute a DNA-binding region (zn(2)-C6 fungal-type); the sequence is CYACQRGHLTCGDERPCQRCIKRGFQDAC. 3 stretches are compositionally biased toward polar residues: residues 129 to 213, 267 to 277, and 361 to 379; these read NNVN…TPSA, PSDSGAQRGSI, and MMTTSSATFEDTTNSGAFN. Disordered regions lie at residues 129–224, 264–297, 353–399, 533–567, and 627–666; these read NNVN…FNST, DTPPSDSGAQRGSIGQNGSGTFGLTGSSFSESPS, SPAS…STPQ, NHNVNTGGSSGLMTGSTSRGSYTPRPYSSEVYNSS, and GSNGEADAGLNGEATSNETNELNGSHTNGATTNGRGQRRW. 2 stretches are compositionally biased toward low complexity: residues 380–399 and 543–553; these read SRQNVPVSQQRQQPVVSTPQ and GLMTGSTSRGS. Polar residues predominate over residues 639–661; sequence EATSNETNELNGSHTNGATTNGR.

It belongs to the ERT1/acuK family.

It localises to the nucleus. Its function is as follows. Transcription factor which regulates nonfermentable carbon utilization. Activator of gluconeogenetic genes. In Trichophyton verrucosum (strain HKI 0517), this protein is Transcription activator of gluconeogenesis TRV_01442.